Reading from the N-terminus, the 67-residue chain is Small ribosomal subunit protein bS21 (67 aa).

It belongs to the bacterial ribosomal protein bS21 family.

The polypeptide is Small ribosomal subunit protein bS21 (Acidiphilium cryptum (strain JF-5)).